The chain runs to 422 residues: Oxysterol-binding protein 7 (422 aa).

A disordered region spans residues 283–313 (EAAPASSASKKEKKKEKKKAKHSKHTCSPSD). Positions 293–307 (KEKKKEKKKAKHSKH) are enriched in basic residues. Residues 354 to 384 (MQAADQIKKEIEDEQRKRLQITKEEEKKERA) adopt a coiled-coil conformation. The disordered stretch occupies residues 402 to 422 (TLAPVSNSTSSTASDAASGSN). The span at 407 to 422 (SNSTSSTASDAASGSN) shows a compositional bias: low complexity.

Belongs to the OSBP family.

The chain is Oxysterol-binding protein 7 (osbG) from Dictyostelium discoideum (Social amoeba).